We begin with the raw amino-acid sequence, 617 residues long: Chitin elicitor receptor kinase 1 (617 aa).

An N-terminal signal peptide occupies residues Met1–Ser23. Topologically, residues Lys24–Ala232 are extracellular. 3 disulfides stabilise this stretch: Cys25–Cys93, Cys29–Cys155, and Cys91–Cys153. Asn40, Asn52, and Asn102 each carry an N-linked (GlcNAc...) asparagine glycan. Positions Val46–Lys74 constitute a LysM 1; degenerate domain. The LysM 2; degenerate domain maps to Arg108–Asn140. A chitin-binding site is contributed by Gln109 to Arg115. N-linked (GlcNAc...) asparagine glycosylation occurs at Asn123. Position 137 to 143 (Pro137 to Leu143) interacts with chitin. N-linked (GlcNAc...) asparagine glycosylation is present at Asn152. Residues Val168–Pro211 enclose the LysM 3 domain. A helical membrane pass occupies residues Gly233–Val253. Residues Tyr254–Arg617 are Cytoplasmic-facing. Residues Ser266, Ser268, and Ser274 each carry the phosphoserine modification. Positions Phe322–Phe594 constitute a Protein kinase domain. Residues Ile328–Val336 and Lys349 contribute to the ATP site. Position 390 is a phosphotyrosine (Tyr390). The active-site Proton acceptor is the Asp441. Phosphothreonine is present on residues Thr479 and Thr519.

This sequence belongs to the protein kinase superfamily. Ser/Thr protein kinase family. In terms of assembly, forms homodimers and homooligomers. Homodimerization is required to trigger plant defenses. Binds to chitin, chitosan and chito-oligomer oligosaccharide elicitors. Interaction with chitin octamer (NAG(8)) promotes homodimerization while shorter chitin oligomers inhibit homodimerization. Interacts with Pseudomonas syringae hopAB2/avrPtoB. Interacts (preferentially when unphosphorylated) with PBL27 at the plasma membrane. Binds to IOS1. Autophosphorylated. Autophosphorylation is induced by chitin and derivatives. In terms of processing, ubiquitinated and targeted to the proteasome by hopAB2/avrPtoB of Pseudomonas syringae pv. tomato DC3000. In terms of tissue distribution, expressed ubiquitously, with lowest expression in pollen.

It is found in the cell membrane. The catalysed reaction is L-seryl-[protein] + ATP = O-phospho-L-seryl-[protein] + ADP + H(+). The enzyme catalyses L-threonyl-[protein] + ATP = O-phospho-L-threonyl-[protein] + ADP + H(+). With respect to regulation, activated by chitin-mediated homodimerization. In terms of biological role, lysin motif (LysM) receptor kinase that functions as a cell surface receptor in chitin elicitor (chitooligosaccharides) signaling leading to innate immunity toward both biotic and abiotic stresses (e.g. tolerance to salinity, heavy-metal stresses, and Botrytis cinerea infection). Recognizes microbe-derived N-acetylglucosamine (NAG)-containing ligands. Involved in the resistance to pathogenic fungi Alternaria brassicicola and Erysiphe cichoracearum, probably by sensing microbe-associated molecular patterns (MAMP) and pathogen-associated molecular patterns (PAMP). Plays an essential role in detecting peptidoglycans (e.g. PGNs) and restricting bacterial growth. Target of the bacterial type III effector E3-ligase protein hopAB2/avrPtoB of Pseudomonas syringae pv. tomato DC3000 that mediates ubiquitination and subsequent proteolysis, thus blocking all defense responses by suppressing PAMP-triggered immunity (PTI). Mediates chitin-induced phosphorylation of PBL27. The polypeptide is Chitin elicitor receptor kinase 1 (CERK1) (Arabidopsis thaliana (Mouse-ear cress)).